A 1169-amino-acid chain; its full sequence is Translation initiation factor IF-2 (1169 aa).

Disordered stretches follow at residues 69–108 (IKAK…PLLI) and 139–568 (ALSK…LRAA). Composition is skewed to basic and acidic residues over residues 71–83 (AKNE…DNKN) and 92–102 (HPEKLSKEGLN). Over residues 139-156 (ALSKNQNKTNTSVITTPN) the composition is skewed to polar residues. Positions 157-171 (LKDKKNPSALQDKKP) are enriched in basic and acidic residues. Low complexity predominate over residues 196–214 (NLANSNRNINANKINNSVN). Polar residues predominate over residues 231–248 (ADNNNFPKKNLNSPNVKS). Residues 265-281 (NTNRPNSNSRQPSSNTQ) show a composition bias toward low complexity. Composition is skewed to polar residues over residues 282–294 (ISAN…NRQG), 412–432 (MQLQ…NVNK), and 439–455 (NQKT…SPSP). Over residues 472–486 (GRTDWDDSAKLEALR) the composition is skewed to basic and acidic residues. A compositionally biased stretch (basic residues) spans 544-560 (KQFKKKKKETTRQRQKR). The region spanning 661–838 (KRPPVITVMG…EVEDLQANPE (178 aa)) is the tr-type G domain. The segment at 670 to 677 (GHVDHGKT) is G1. Position 670-677 (670-677 (GHVDHGKT)) interacts with GTP. The interval 695 to 699 (GITQH) is G2. The tract at residues 720–723 (DTPG) is G3. GTP contacts are provided by residues 720–724 (DTPGH) and 774–777 (NKID). Residues 774–777 (NKID) are G4. Positions 810–812 (SAI) are G5.

The protein belongs to the TRAFAC class translation factor GTPase superfamily. Classic translation factor GTPase family. IF-2 subfamily.

The protein localises to the cytoplasm. Functionally, one of the essential components for the initiation of protein synthesis. Protects formylmethionyl-tRNA from spontaneous hydrolysis and promotes its binding to the 30S ribosomal subunits. Also involved in the hydrolysis of GTP during the formation of the 70S ribosomal complex. This is Translation initiation factor IF-2 from Prochlorococcus marinus subsp. pastoris (strain CCMP1986 / NIES-2087 / MED4).